The chain runs to 319 residues: Small ribosomal subunit protein RACK1 (319 aa).

At A2 the chain carries N-acetylalanine. WD repeat units follow at residues G15–G55, G63–R102, G105–L145, H147–D191, G194–T233, S235–R275, and A284–N319. Residues K46 and K53 each participate in a glycyl lysine isopeptide (Lys-Gly) (interchain with G-Cter in ubiquitin) cross-link. T96 bears the Phosphothreonine mark. Residues K107, K137, and K161 each participate in a glycyl lysine isopeptide (Lys-Gly) (interchain with G-Cter in ubiquitin) cross-link. A Phosphothreonine modification is found at T168.

Belongs to the WD repeat G protein beta family. Ribosomal protein RACK1 subfamily. Component of the small ribosomal subunit (SSU). Mature yeast ribosomes consist of a small (40S) and a large (60S) subunit. The 40S small subunit contains 1 molecule of ribosomal RNA (18S rRNA) and 33 different proteins (encoded by 57 genes). The large 60S subunit contains 3 rRNA molecules (25S, 5.8S and 5S rRNA) and 46 different proteins (encoded by 81 genes). RACK1 is located at the head of the SSU in the vicinity of the mRNA exit channel. RACK1 interacts with the mRNA-binding protein SCP16. RACK1 also exists simultaneously as a homodimer in a cytosolic non-ribosome-bound form.

Its subcellular location is the cytoplasm. Its function is as follows. Component of the ribosome, a large ribonucleoprotein complex responsible for the synthesis of proteins in the cell. The small ribosomal subunit (SSU) binds messenger RNAs (mRNAs) and translates the encoded message by selecting cognate aminoacyl-transfer RNA (tRNA) molecules. The large subunit (LSU) contains the ribosomal catalytic site termed the peptidyl transferase center (PTC), which catalyzes the formation of peptide bonds, thereby polymerizing the amino acids delivered by tRNAs into a polypeptide chain. The nascent polypeptides leave the ribosome through a tunnel in the LSU and interact with protein factors that function in enzymatic processing, targeting, and the membrane insertion of nascent chains at the exit of the ribosomal tunnel. Located at the head of the 40S ribosomal subunit in the vicinity of the mRNA exit channel, RACK1 serves as a scaffold protein that can recruit other proteins to the ribosome. Involved in induction of the ribosome quality control (RQC) pathway; a pathway that degrades nascent peptide chains during problematic translation. Involved in the negative regulation of translation of a specific subset of proteins. In Saccharomyces cerevisiae (strain ATCC 204508 / S288c) (Baker's yeast), this protein is Small ribosomal subunit protein RACK1.